A 339-amino-acid chain; its full sequence is Glucokinase (339 aa).

16-21 provides a ligand contact to ATP; sequence GDIGGT.

It belongs to the bacterial glucokinase family.

The protein localises to the cytoplasm. It carries out the reaction D-glucose + ATP = D-glucose 6-phosphate + ADP + H(+). This is Glucokinase from Rhizobium meliloti (strain 1021) (Ensifer meliloti).